Here is a 37-residue protein sequence, read N- to C-terminus: Large ribosomal subunit protein bL36 (37 aa).

It belongs to the bacterial ribosomal protein bL36 family.

The sequence is that of Large ribosomal subunit protein bL36 from Metamycoplasma arthritidis (strain 158L3-1) (Mycoplasma arthritidis).